We begin with the raw amino-acid sequence, 281 residues long: Succinate dehydrogenase [ubiquinone] iron-sulfur subunit 1, mitochondrial (281 aa).

Residues 1–25 (MAAAALLRRSPAARALLSPALSSRL) constitute a mitochondrion transit peptide. The tract at residues 26–48 (VASKPHSSSPAPPPPPSKAGANT) is disordered. The 93-residue stretch at 49 to 141 (KTFSIYRWDP…ASTISPLPHM (93 aa)) folds into the 2Fe-2S ferredoxin-type domain. Residues Cys-102, Cys-107, and Cys-122 each coordinate [2Fe-2S] cluster. Positions 184–214 (DRAKLDGMYECILCACCSTSCPSYWWNPEEY) constitute a 4Fe-4S ferredoxin-type domain. The [4Fe-4S] cluster site is built by Cys-194, Cys-197, and Cys-200. Cys-204 serves as a coordination point for [3Fe-4S] cluster. Trp-209 contributes to the a ubiquinone binding site. Cys-251 and Cys-257 together coordinate [3Fe-4S] cluster. A [4Fe-4S] cluster-binding site is contributed by Cys-261.

Belongs to the succinate dehydrogenase/fumarate reductase iron-sulfur protein family. As to quaternary structure, component of complex II composed of eight subunits in plants: four classical SDH subunits SDH1, SDH2, SDH3 and SDH4 (a flavoprotein (FP), an iron-sulfur protein (IP), and a cytochrome b composed of a large and a small subunit.), as well as four subunits unknown in mitochondria from bacteria and heterotrophic eukaryotes. The cofactor is [2Fe-2S] cluster. [3Fe-4S] cluster is required as a cofactor. [4Fe-4S] cluster serves as cofactor.

It is found in the mitochondrion inner membrane. It carries out the reaction a quinone + succinate = fumarate + a quinol. Its pathway is carbohydrate metabolism; tricarboxylic acid cycle; fumarate from succinate (eukaryal route): step 1/1. Its function is as follows. Iron-sulfur protein (IP) subunit of succinate dehydrogenase (SDH) that is involved in complex II of the mitochondrial electron transport chain and is responsible for transferring electrons from succinate to ubiquinone (coenzyme Q). This is Succinate dehydrogenase [ubiquinone] iron-sulfur subunit 1, mitochondrial from Oryza sativa subsp. japonica (Rice).